We begin with the raw amino-acid sequence, 712 residues long: Elongation factor G (712 aa).

One can recognise a tr-type G domain in the interval 8–290; the sequence is TRYRNIGISA…AVIEFLPSPT (283 aa). GTP contacts are provided by residues 17–24, 88–92, and 142–145; these read AHIDAGKT, DTPGH, and NKMD.

It belongs to the TRAFAC class translation factor GTPase superfamily. Classic translation factor GTPase family. EF-G/EF-2 subfamily.

It is found in the cytoplasm. Its function is as follows. Catalyzes the GTP-dependent ribosomal translocation step during translation elongation. During this step, the ribosome changes from the pre-translocational (PRE) to the post-translocational (POST) state as the newly formed A-site-bound peptidyl-tRNA and P-site-bound deacylated tRNA move to the P and E sites, respectively. Catalyzes the coordinated movement of the two tRNA molecules, the mRNA and conformational changes in the ribosome. The sequence is that of Elongation factor G from Acinetobacter baumannii (strain SDF).